We begin with the raw amino-acid sequence, 151 residues long: MSIPFSNTHYRIPQGFGNLLEGLTREILREQPDNIPAFAAAYFESLLEKREKTNFDPAEWGSKVEDRFYNNHAFEEQEPPEKSDPKQEESQISGKEEETSVTILDSSEEDKEKEEVAAVKIQAAFRGHIAREEAKKMKTNSLQNEEKEENK.

Disordered stretches follow at residues D56 to E115 and G127 to K151. The segment covering S62 to E98 has biased composition (basic and acidic residues). In terms of domain architecture, IQ spans E114–Q143.

Homodimer. May interact with ROPN1. In terms of tissue distribution, testis and sperm specific.

It is found in the membrane. Functionally, sperm surface zona pellucida binding protein. Helps to bind spermatozoa to the zona pellucida with high affinity. Might function in binding zona pellucida and carbohydrates. The protein is Sperm surface protein Sp17 (SPA17) of Homo sapiens (Human).